We begin with the raw amino-acid sequence, 205 residues long: Dephospho-CoA kinase (205 aa).

Residues 4–203 (KIGITGGIGS…QKIHYLCSAK (200 aa)) enclose the DPCK domain. 12–17 (GSGKSV) is a binding site for ATP.

This sequence belongs to the CoaE family.

It localises to the cytoplasm. The catalysed reaction is 3'-dephospho-CoA + ATP = ADP + CoA + H(+). Its pathway is cofactor biosynthesis; coenzyme A biosynthesis; CoA from (R)-pantothenate: step 5/5. Its function is as follows. Catalyzes the phosphorylation of the 3'-hydroxyl group of dephosphocoenzyme A to form coenzyme A. The chain is Dephospho-CoA kinase from Bacteroides fragilis (strain ATCC 25285 / DSM 2151 / CCUG 4856 / JCM 11019 / LMG 10263 / NCTC 9343 / Onslow / VPI 2553 / EN-2).